We begin with the raw amino-acid sequence, 114 residues long: T cell receptor beta variable 6-1 (114 aa).

The first 21 residues, 1–21, serve as a signal peptide directing secretion; that stretch reads MSIGLLCCVAFSLLWASPVNA. In terms of domain architecture, Ig-like spans 22 to 114; the sequence is GVTQTPKFQV…TSVYFCASSE (93 aa). Cysteine 42 and cysteine 110 form a disulfide bridge. Asparagine 84 carries an N-linked (GlcNAc...) asparagine glycan.

In terms of assembly, alpha-beta TR is a heterodimer composed of an alpha and beta chain; disulfide-linked. The alpha-beta TR is associated with the transmembrane signaling CD3 coreceptor proteins to form the TR-CD3 (TcR or TCR). The assembly of alpha-beta TR heterodimers with CD3 occurs in the endoplasmic reticulum where a single alpha-beta TR heterodimer associates with one CD3D-CD3E heterodimer, one CD3G-CD3E heterodimer and one CD247 homodimer forming a stable octameric structure. CD3D-CD3E and CD3G-CD3E heterodimers preferentially associate with TR alpha and TR beta chains, respectively. The association of the CD247 homodimer is the last step of TcR assembly in the endoplasmic reticulum and is required for transport to the cell surface.

The protein localises to the cell membrane. V region of the variable domain of T cell receptor (TR) beta chain that participates in the antigen recognition. Alpha-beta T cell receptors are antigen specific receptors which are essential to the immune response and are present on the cell surface of T lymphocytes. Recognize peptide-major histocompatibility (MH) (pMH) complexes that are displayed by antigen presenting cells (APC), a prerequisite for efficient T cell adaptive immunity against pathogens. Binding of alpha-beta TR to pMH complex initiates TR-CD3 clustering on the cell surface and intracellular activation of LCK that phosphorylates the ITAM motifs of CD3G, CD3D, CD3E and CD247 enabling the recruitment of ZAP70. In turn ZAP70 phosphorylates LAT, which recruits numerous signaling molecules to form the LAT signalosome. The LAT signalosome propagates signal branching to three major signaling pathways, the calcium, the mitogen-activated protein kinase (MAPK) kinase and the nuclear factor NF-kappa-B (NF-kB) pathways, leading to the mobilization of transcription factors that are critical for gene expression and essential for T cell growth and differentiation. The T cell repertoire is generated in the thymus, by V-(D)-J rearrangement. This repertoire is then shaped by intrathymic selection events to generate a peripheral T cell pool of self-MH restricted, non-autoaggressive T cells. Post-thymic interaction of alpha-beta TR with the pMH complexes shapes TR structural and functional avidity. The sequence is that of T cell receptor beta variable 6-1 from Homo sapiens (Human).